Reading from the N-terminus, the 389-residue chain is S-adenosylmethionine synthase (389 aa).

ATP is bound at residue His-19. Asp-21 provides a ligand contact to Mg(2+). Glu-47 contributes to the K(+) binding site. L-methionine-binding residues include Glu-60 and Gln-103. The interval 103–113 (QSGDIAQGVDR) is flexible loop. ATP contacts are provided by residues 168 to 170 (DGK), 234 to 235 (RF), Asp-243, 249 to 250 (RK), Ala-266, and Lys-270. Position 243 (Asp-243) interacts with L-methionine. An L-methionine-binding site is contributed by Lys-274.

The protein belongs to the AdoMet synthase family. Homotetramer; dimer of dimers. Mg(2+) is required as a cofactor. It depends on K(+) as a cofactor.

The protein resides in the cytoplasm. It carries out the reaction L-methionine + ATP + H2O = S-adenosyl-L-methionine + phosphate + diphosphate. Its pathway is amino-acid biosynthesis; S-adenosyl-L-methionine biosynthesis; S-adenosyl-L-methionine from L-methionine: step 1/1. In terms of biological role, catalyzes the formation of S-adenosylmethionine (AdoMet) from methionine and ATP. The overall synthetic reaction is composed of two sequential steps, AdoMet formation and the subsequent tripolyphosphate hydrolysis which occurs prior to release of AdoMet from the enzyme. The protein is S-adenosylmethionine synthase of Nitratidesulfovibrio vulgaris (strain DSM 19637 / Miyazaki F) (Desulfovibrio vulgaris).